Consider the following 145-residue polypeptide: Peptide methionine sulfoxide reductase MsrB (145 aa).

The MsrB domain maps to 6-129; sequence KNERLQQLTD…NSAALRFIPV (124 aa). C118 functions as the Nucleophile in the catalytic mechanism.

It belongs to the MsrB Met sulfoxide reductase family.

It catalyses the reaction L-methionyl-[protein] + [thioredoxin]-disulfide + H2O = L-methionyl-(R)-S-oxide-[protein] + [thioredoxin]-dithiol. The chain is Peptide methionine sulfoxide reductase MsrB from Listeria monocytogenes serovar 1/2a (strain ATCC BAA-679 / EGD-e).